We begin with the raw amino-acid sequence, 572 residues long: Na(+)/citrate cotransporter (572 aa).

Transmembrane regions (helical) follow at residues 13 to 33 (SFVI…LVPD), 53 to 73 (VIPV…LKVL), 80 to 100 (VQYM…ATAV), 124 to 144 (LMLG…NTAT), 218 to 238 (AASI…VLLG), 255 to 275 (SWFA…WLWL), 315 to 335 (PLSY…ILWF), and 357 to 377 (HVTD…VPSQ). Asparagine 382 is a glycosylation site (N-linked (GlcNAc...) asparagine). Transmembrane regions (helical) follow at residues 410–430 (VPWG…GCET), 443–463 (PLSS…VAMT), 491–511 (PLYV…LPVA), and 532–552 (TGLV…NTWG). Asparagine 566 carries N-linked (GlcNAc...) asparagine glycosylation.

Belongs to the SLC13A/DASS transporter (TC 2.A.47) family. NADC subfamily. Homodimer. As to expression, expressed in liver, testis and brain.

It is found in the cell membrane. The enzyme catalyses citrate(out) + 4 Na(+)(out) = citrate(in) + 4 Na(+)(in). With respect to regulation, inhibited by Li(+). In terms of biological role, high-affinity sodium/citrate cotransporter that mediates citrate entry into cells, which is a critical participant of biochemical pathways. May function in various metabolic processes in which citrate has a critical role such as energy production (Krebs cycle), fatty acid synthesis, cholesterol synthesis, glycolysis, and gluconeogenesis. Transports citrate into the cell in a Na(+)-dependent manner, recognizing the trivalent form of citrate (physiological pH) rather than the divalent form. Can recognize succinate as a substrate, but its affinity for succinate is several fold lower than for citrate. The stoichiometry is probably 4 Na(+) for each carboxylate, irrespective of whether the translocated substrate is divalent or trivalent, rendering the process electrogenic. Involved in the regulation of citrate levels in the brain. This chain is Na(+)/citrate cotransporter (Slc13a5), found in Rattus norvegicus (Rat).